The sequence spans 162 residues: Caveolin-2 (162 aa).

The Cytoplasmic portion of the chain corresponds to 1–86; the sequence is MGLETEKADV…FEISKYVMYK (86 aa). Tyrosine 19 is modified (phosphotyrosine; by SRC). Phosphoserine is present on serine 20. Tyrosine 27 carries the phosphotyrosine; by SRC modification. The residue at position 36 (serine 36) is a Phosphoserine. An intramembrane region (helical) is located at residues 87–107; sequence FLTVFLAIPLAFAAGILFATL. Residues 108-162 are Cytoplasmic-facing; that stretch reads SCLHIWIIMPFVKTCLMVLPSVQTIWKSVTDVIIAPLCTSVGRSLSSISLQLSHD.

This sequence belongs to the caveolin family. Monomer or homodimer. Interacts with CAV1; the interaction forms a stable heterooligomeric complex that is required for targeting to lipid rafts and for caveolae formation. Tyrosine phosphorylated forms do not form heterooligomers with the Tyr-19-phosphorylated form existing as a monomer or dimer, and the Tyr-27-form as a monomer only. Interacts (tyrosine phosphorylated form) with the SH2 domain-containing proteins, RASA1, NCK1 and SRC. Interacts (tyrosine phosphorylated form) with INSR, the interaction (Tyr-27-phosphorylated form) is increased on insulin stimulation. Interacts (Tyr-19 phosphorylated form) with MAPK1 (phosphorylated form); the interaction, promoted by insulin, leads to nuclear location and MAPK1 activation. Interacts with STAT3; the interaction is increased on insulin-induced tyrosine phosphorylation leading to STAT activation. Post-translationally, phosphorylated on serine and tyrosine residues. Phosphorylation on Ser-36 appears to modulate mitosis in endothelial cells. Phosphorylation on both Tyr-19 and Tyr-27 is required for insulin-induced 'Ser-727' phosphorylation of STAT3 and its activation. Phosphorylation on Tyr-19 is required for insulin-induced phosphorylation of MAPK1 and DNA binding of STAT3. Tyrosine phosphorylation is induced by both EGF and insulin.

Its subcellular location is the nucleus. The protein resides in the cytoplasm. The protein localises to the golgi apparatus membrane. It is found in the cell membrane. It localises to the membrane. Its subcellular location is the caveola. Its function is as follows. May act as a scaffolding protein within caveolar membranes. Interacts directly with G-protein alpha subunits and can functionally regulate their activity. Acts as an accessory protein in conjunction with CAV1 in targeting to lipid rafts and driving caveolae formation. The Ser-36 phosphorylated form has a role in modulating mitosis in endothelial cells. Positive regulator of cellular mitogenesis of the MAPK signaling pathway. Required for the insulin-stimulated nuclear translocation and activation of MAPK1 and STAT3, and the subsequent regulation of cell cycle progression. This is Caveolin-2 (CAV2) from Eulemur macaco macaco (Black lemur).